Here is a 474-residue protein sequence, read N- to C-terminus: Trehalose-6-phosphate synthase (474 aa).

R10 contacts D-glucose 6-phosphate. 22 to 23 is a UDP-alpha-D-glucose binding site; that stretch reads GG. D-glucose 6-phosphate-binding residues include Y77 and D131. The UDP-alpha-D-glucose site is built by R263 and K268. R301 serves as a coordination point for D-glucose 6-phosphate. UDP-alpha-D-glucose contacts are provided by residues F340 and 366 to 370; that span reads LVAKE.

This sequence belongs to the glycosyltransferase 20 family. As to quaternary structure, homotetramer.

The catalysed reaction is D-glucose 6-phosphate + UDP-alpha-D-glucose = alpha,alpha-trehalose 6-phosphate + UDP + H(+). It functions in the pathway glycan biosynthesis; trehalose biosynthesis. Probably involved in the osmoprotection via the biosynthesis of trehalose. Catalyzes the transfer of glucose from UDP-alpha-D-glucose (UDP-Glc) to D-glucose 6-phosphate (Glc-6-P) to form trehalose-6-phosphate. Acts with retention of the anomeric configuration of the UDP-sugar donor. This chain is Trehalose-6-phosphate synthase, found in Escherichia coli O157:H7.